The primary structure comprises 194 residues: Imidazoleglycerol-phosphate dehydratase (194 aa).

It belongs to the imidazoleglycerol-phosphate dehydratase family.

It is found in the cytoplasm. It carries out the reaction D-erythro-1-(imidazol-4-yl)glycerol 3-phosphate = 3-(imidazol-4-yl)-2-oxopropyl phosphate + H2O. It functions in the pathway amino-acid biosynthesis; L-histidine biosynthesis; L-histidine from 5-phospho-alpha-D-ribose 1-diphosphate: step 6/9. This chain is Imidazoleglycerol-phosphate dehydratase, found in Chlorobaculum tepidum (strain ATCC 49652 / DSM 12025 / NBRC 103806 / TLS) (Chlorobium tepidum).